Consider the following 91-residue polypeptide: uncharacterized protein (91 aa).

An N-terminal signal peptide occupies residues 1-20; that stretch reads MFSRVLALLAVLLLSANTWA.

It belongs to the BhsA/McbA family.

It is found in the periplasm. This is an uncharacterized protein from Escherichia coli O157:H7.